The chain runs to 520 residues: 2-isopropylmalate synthase (520 aa).

One can recognise a Pyruvate carboxyltransferase domain in the interval 12 to 274 (IRIFDTTLRD…DSAINTPRIV (263 aa)). Residues D21, H209, H211, and N245 each contribute to the Mn(2+) site. The regulatory domain stretch occupies residues 396–520 (RLASMTISDV…VIAGKTAAVA (125 aa)).

This sequence belongs to the alpha-IPM synthase/homocitrate synthase family. LeuA type 1 subfamily. Homodimer. Requires Mn(2+) as cofactor.

The protein resides in the cytoplasm. It carries out the reaction 3-methyl-2-oxobutanoate + acetyl-CoA + H2O = (2S)-2-isopropylmalate + CoA + H(+). Its pathway is amino-acid biosynthesis; L-leucine biosynthesis; L-leucine from 3-methyl-2-oxobutanoate: step 1/4. Its function is as follows. Catalyzes the condensation of the acetyl group of acetyl-CoA with 3-methyl-2-oxobutanoate (2-ketoisovalerate) to form 3-carboxy-3-hydroxy-4-methylpentanoate (2-isopropylmalate). The polypeptide is 2-isopropylmalate synthase (Xanthomonas oryzae pv. oryzae (strain MAFF 311018)).